A 102-amino-acid chain; its full sequence is Acid shock protein (102 aa).

Positions 1 to 21 (MKKVLALVVAAAMGLSSAAFA) are cleaved as a signal peptide. Low complexity predominate over residues 21–41 (AAETTTTPAPTATTTKAAPAK). Residues 21-102 (AAETTTTPAP…PAKPAAQPAA (82 aa)) form a disordered region. A propeptide spanning residues 22 to 58 (AETTTTPAPTATTTKAAPAKTTHHKKQHKAAPAQKAQ) is cleaved from the precursor. The span at 80–90 (AAKKHAKKHSH) shows a compositional bias: basic residues. Positions 91–102 (QQPAKPAAQPAA) are enriched in low complexity.

It belongs to the Asr family. Post-translationally, proteolytic processing gives rise to the active protein.

The protein localises to the periplasm. Its function is as follows. Required for growth and/or survival at acidic conditions. The protein is Acid shock protein of Escherichia coli (strain K12 / MC4100 / BW2952).